Here is a 333-residue protein sequence, read N- to C-terminus: Cytochrome f (333 aa).

The N-terminal stretch at 1–44 (MRNACTRARLTRTARAMVKTLFIAIASVTFFFTSDLALPQSAAA) is a signal peptide. Residues Y45, C66, C69, and H70 each coordinate heme. Residues 299–318 (VGWLIAFVALVMLAQVMLVL) traverse the membrane as a helical segment.

This sequence belongs to the cytochrome f family. The 4 large subunits of the cytochrome b6-f complex are cytochrome b6, subunit IV (17 kDa polypeptide, PetD), cytochrome f and the Rieske protein, while the 4 small subunits are PetG, PetL, PetM and PetN. The complex functions as a dimer. Heme is required as a cofactor.

It is found in the cellular thylakoid membrane. Component of the cytochrome b6-f complex, which mediates electron transfer between photosystem II (PSII) and photosystem I (PSI), cyclic electron flow around PSI, and state transitions. This Trichormus variabilis (strain ATCC 29413 / PCC 7937) (Anabaena variabilis) protein is Cytochrome f.